Consider the following 679-residue polypeptide: Methionine--tRNA ligase (679 aa).

Residues 14–24 carry the 'HIGH' region motif; that stretch reads PYANGSIHLGH. The Zn(2+) site is built by C145, C148, C158, and C161. Residues 331 to 335 carry the 'KMSKS' region motif; the sequence is KMSKS. K334 is an ATP binding site. The tRNA-binding domain maps to 577–679; sequence TFAAVDLRIA…NGAKPGQRVM (103 aa).

Belongs to the class-I aminoacyl-tRNA synthetase family. MetG type 1 subfamily. In terms of assembly, homodimer. Zn(2+) serves as cofactor.

The protein resides in the cytoplasm. It carries out the reaction tRNA(Met) + L-methionine + ATP = L-methionyl-tRNA(Met) + AMP + diphosphate. Its function is as follows. Is required not only for elongation of protein synthesis but also for the initiation of all mRNA translation through initiator tRNA(fMet) aminoacylation. This chain is Methionine--tRNA ligase, found in Stutzerimonas stutzeri (strain A1501) (Pseudomonas stutzeri).